Consider the following 576-residue polypeptide: Lysine--tRNA ligase (576 aa).

2 residues coordinate Mg(2+): Glu-413 and Glu-420.

Belongs to the class-II aminoacyl-tRNA synthetase family. Homodimer. It depends on Mg(2+) as a cofactor.

Its subcellular location is the cytoplasm. It catalyses the reaction tRNA(Lys) + L-lysine + ATP = L-lysyl-tRNA(Lys) + AMP + diphosphate. This chain is Lysine--tRNA ligase, found in Bacteroides thetaiotaomicron (strain ATCC 29148 / DSM 2079 / JCM 5827 / CCUG 10774 / NCTC 10582 / VPI-5482 / E50).